We begin with the raw amino-acid sequence, 547 residues long: Glucose-6-phosphate isomerase (547 aa).

Residue Glu-351 is the Proton donor of the active site. Residues His-382 and Lys-510 contribute to the active site.

This sequence belongs to the GPI family.

It is found in the cytoplasm. The catalysed reaction is alpha-D-glucose 6-phosphate = beta-D-fructose 6-phosphate. It functions in the pathway carbohydrate biosynthesis; gluconeogenesis. Its pathway is carbohydrate degradation; glycolysis; D-glyceraldehyde 3-phosphate and glycerone phosphate from D-glucose: step 2/4. Its function is as follows. Catalyzes the reversible isomerization of glucose-6-phosphate to fructose-6-phosphate. This Saccharophagus degradans (strain 2-40 / ATCC 43961 / DSM 17024) protein is Glucose-6-phosphate isomerase.